The following is a 243-amino-acid chain: Phosphoribosylaminoimidazole-succinocarboxamide synthase (243 aa).

Belongs to the SAICAR synthetase family.

The enzyme catalyses 5-amino-1-(5-phospho-D-ribosyl)imidazole-4-carboxylate + L-aspartate + ATP = (2S)-2-[5-amino-1-(5-phospho-beta-D-ribosyl)imidazole-4-carboxamido]succinate + ADP + phosphate + 2 H(+). It participates in purine metabolism; IMP biosynthesis via de novo pathway; 5-amino-1-(5-phospho-D-ribosyl)imidazole-4-carboxamide from 5-amino-1-(5-phospho-D-ribosyl)imidazole-4-carboxylate: step 1/2. The protein is Phosphoribosylaminoimidazole-succinocarboxamide synthase of Prochlorococcus marinus (strain MIT 9211).